Here is a 163-residue protein sequence, read N- to C-terminus: Lipoprotein signal peptidase (163 aa).

The next 4 helical transmembrane spans lie at 9–29 (AWPW…SKYL), 42–62 (ILPF…SFLG), 67–87 (WQII…ILWL), and 93–113 (SEIM…GNFI). Catalysis depends on residues Asp-123 and Asp-141. A helical transmembrane segment spans residues 137-157 (FNVADSAICVGVFLLIVHMLL).

Belongs to the peptidase A8 family.

It localises to the cell inner membrane. The catalysed reaction is Release of signal peptides from bacterial membrane prolipoproteins. Hydrolyzes -Xaa-Yaa-Zaa-|-(S,diacylglyceryl)Cys-, in which Xaa is hydrophobic (preferably Leu), and Yaa (Ala or Ser) and Zaa (Gly or Ala) have small, neutral side chains.. Its pathway is protein modification; lipoprotein biosynthesis (signal peptide cleavage). Functionally, this protein specifically catalyzes the removal of signal peptides from prolipoproteins. The protein is Lipoprotein signal peptidase of Coxiella burnetii (strain RSA 493 / Nine Mile phase I).